We begin with the raw amino-acid sequence, 153 residues long: Cytochrome c-type biogenesis protein CcmE (153 aa).

The Cytoplasmic segment spans residues 1–7 (MKPRHKR). The helical; Signal-anchor for type II membrane protein transmembrane segment at 8–28 (LAIAGGVLVAVGAIATLVLNA) threads the bilayer. Over 29-153 (FQSNLVFFYS…SSQAATGDPR (125 aa)) the chain is Periplasmic. Heme-binding residues include His-120 and Tyr-124. The disordered stretch occupies residues 130–153 (AEALKRAKEGGQMQSSQAATGDPR). A compositionally biased stretch (polar residues) spans 141–153 (QMQSSQAATGDPR).

It belongs to the CcmE/CycJ family.

Its subcellular location is the cell inner membrane. In terms of biological role, heme chaperone required for the biogenesis of c-type cytochromes. Transiently binds heme delivered by CcmC and transfers the heme to apo-cytochromes in a process facilitated by CcmF and CcmH. This Leptothrix cholodnii (strain ATCC 51168 / LMG 8142 / SP-6) (Leptothrix discophora (strain SP-6)) protein is Cytochrome c-type biogenesis protein CcmE.